The following is a 312-amino-acid chain: Beta-ketoacyl-[acyl-carrier-protein] synthase III (312 aa).

Active-site residues include C112 and H237. An ACP-binding region spans residues 238–242; sequence QANIR. N267 is an active-site residue.

This sequence belongs to the thiolase-like superfamily. FabH family. In terms of assembly, homodimer.

The protein resides in the cytoplasm. The catalysed reaction is malonyl-[ACP] + acetyl-CoA + H(+) = 3-oxobutanoyl-[ACP] + CO2 + CoA. The protein operates within lipid metabolism; fatty acid biosynthesis. Its function is as follows. Catalyzes the condensation reaction of fatty acid synthesis by the addition to an acyl acceptor of two carbons from malonyl-ACP. Catalyzes the first condensation reaction which initiates fatty acid synthesis and may therefore play a role in governing the total rate of fatty acid production. Possesses both acetoacetyl-ACP synthase and acetyl transacylase activities. Its substrate specificity determines the biosynthesis of branched-chain and/or straight-chain of fatty acids. The protein is Beta-ketoacyl-[acyl-carrier-protein] synthase III of Listeria innocua serovar 6a (strain ATCC BAA-680 / CLIP 11262).